A 466-amino-acid polypeptide reads, in one-letter code: Delta-1 crystallin (466 aa).

The residue at position 2 (Ala-2) is a Blocked amino end (Ala).

The protein belongs to the lyase 1 family. Argininosuccinate lyase subfamily. In terms of assembly, homotetramer. The N-terminus is blocked. In terms of tissue distribution, eye lens.

Its function is as follows. Delta crystallin, the principal crystallin in embryonic lens, is found only in birds and reptiles. The protein is Delta-1 crystallin (ASL1) of Gallus gallus (Chicken).